Here is a 675-residue protein sequence, read N- to C-terminus: Heat shock 70 kDa protein, mitochondrial (675 aa).

The N-terminal 51 residues, 1 to 51 (MAAVLRSLRRRDVASATFSAYRSLTGSTKPAYVAQKWSCLARPFSSRPAGN), are a transit peptide targeting the mitochondrion. A disordered region spans residues 638-675 (VSKIGEHMSGGSSGGSSAGGSQGGGDQAPEAEYEEVKK). Positions 648-663 (GSSGGSSAGGSQGGGD) are enriched in gly residues. The segment covering 666–675 (PEAEYEEVKK) has biased composition (acidic residues).

It belongs to the heat shock protein 70 family.

The protein resides in the mitochondrion. This is Heat shock 70 kDa protein, mitochondrial from Phaseolus vulgaris (Kidney bean).